A 259-amino-acid chain; its full sequence is Ribonuclease HII (259 aa).

The RNase H type-2 domain occupies 69-257 (VAVCGVDEVG…VLEESQGLIY (189 aa)). A divalent metal cation is bound by residues Asp75, Glu76, and Asp167.

This sequence belongs to the RNase HII family. It depends on Mn(2+) as a cofactor. Mg(2+) serves as cofactor.

It localises to the cytoplasm. It carries out the reaction Endonucleolytic cleavage to 5'-phosphomonoester.. Functionally, endonuclease that specifically degrades the RNA of RNA-DNA hybrids. This is Ribonuclease HII from Shouchella clausii (strain KSM-K16) (Alkalihalobacillus clausii).